The sequence spans 140 residues: Probable lipoprotein LppE (140 aa).

The N-terminal stretch at 1-21 (MCNRLVTVTGVAMVVAAGLSA) is a signal peptide. The N-palmitoyl cysteine moiety is linked to residue cysteine 22. Residue cysteine 22 is the site of S-diacylglycerol cysteine attachment.

It belongs to the mycobacterial 19 kDa antigen family.

It is found in the cell membrane. In Mycobacterium tuberculosis (strain ATCC 25618 / H37Rv), this protein is Probable lipoprotein LppE (lppE).